The chain runs to 141 residues: Secreted RxLR effector protein 69 (141 aa).

A signal peptide spans 1–19 (MHSSTILFVLGAAILAVNG). The RxLR-dEER motif lies at 38–53 (RLLRSNLMKHETGEER). An N-linked (GlcNAc...) asparagine glycan is attached at N120.

The protein belongs to the RxLR effector family.

It is found in the secreted. The protein resides in the host nucleus. Functionally, secreted effector that completely suppresses the host cell death induced by cell death-inducing proteins. In Plasmopara viticola (Downy mildew of grapevine), this protein is Secreted RxLR effector protein 69.